The primary structure comprises 1404 residues: DNA-directed RNA polymerase subunit beta' (1404 aa).

Zn(2+) is bound by residues C70, C72, C85, and C88. Residues D460, D462, and D464 each coordinate Mg(2+). Residues C814, C889, C896, and C899 each coordinate Zn(2+).

The protein belongs to the RNA polymerase beta' chain family. The RNAP catalytic core consists of 2 alpha, 1 beta, 1 beta' and 1 omega subunit. When a sigma factor is associated with the core the holoenzyme is formed, which can initiate transcription. Requires Mg(2+) as cofactor. The cofactor is Zn(2+).

It catalyses the reaction RNA(n) + a ribonucleoside 5'-triphosphate = RNA(n+1) + diphosphate. In terms of biological role, DNA-dependent RNA polymerase catalyzes the transcription of DNA into RNA using the four ribonucleoside triphosphates as substrates. This chain is DNA-directed RNA polymerase subunit beta', found in Xanthomonas axonopodis pv. citri (strain 306).